We begin with the raw amino-acid sequence, 293 residues long: 33 kDa chaperonin (293 aa).

Intrachain disulfides connect Cys-238–Cys-240 and Cys-271–Cys-274.

This sequence belongs to the HSP33 family. Post-translationally, under oxidizing conditions two disulfide bonds are formed involving the reactive cysteines. Under reducing conditions zinc is bound to the reactive cysteines and the protein is inactive.

The protein localises to the cytoplasm. Redox regulated molecular chaperone. Protects both thermally unfolding and oxidatively damaged proteins from irreversible aggregation. Plays an important role in the bacterial defense system toward oxidative stress. This is 33 kDa chaperonin from Clostridium beijerinckii (strain ATCC 51743 / NCIMB 8052) (Clostridium acetobutylicum).